A 430-amino-acid polypeptide reads, in one-letter code: Adenylosuccinate synthetase (430 aa).

GTP is bound by residues 12–18 and 40–42; these read GDEGKGK and GHT. The active-site Proton acceptor is aspartate 13. Positions 13 and 40 each coordinate Mg(2+). Residues 13–16, 38–41, threonine 130, arginine 144, glutamine 225, threonine 240, and arginine 304 contribute to the IMP site; these read DEGK and NAGH. The Proton donor role is filled by histidine 41. 300 to 306 contacts substrate; sequence ATTGRPR. Residues arginine 306, 332–334, and 414–416 contribute to the GTP site; these read KLD and SIG.

It belongs to the adenylosuccinate synthetase family. As to quaternary structure, homodimer. Mg(2+) serves as cofactor.

The protein resides in the cytoplasm. It catalyses the reaction IMP + L-aspartate + GTP = N(6)-(1,2-dicarboxyethyl)-AMP + GDP + phosphate + 2 H(+). It participates in purine metabolism; AMP biosynthesis via de novo pathway; AMP from IMP: step 1/2. Plays an important role in the de novo pathway of purine nucleotide biosynthesis. Catalyzes the first committed step in the biosynthesis of AMP from IMP. This Geobacter metallireducens (strain ATCC 53774 / DSM 7210 / GS-15) protein is Adenylosuccinate synthetase.